The primary structure comprises 79 residues: Cytochrome c oxidase subunit 7A1, mitochondrial (79 aa).

Residues 1-21 (MQALRVSRALIRSFNTTARNR) constitute a mitochondrion transit peptide. The Mitochondrial matrix portion of the chain corresponds to 22-46 (FQNRVPEKQKLFQEDNDIPLYLKGG). The helical transmembrane segment at 47–75 (IVDNILYRVTMGLCLGGSAYSMYCLGWAS) threads the bilayer. Residues 76–79 (FPRN) are Mitochondrial intermembrane-facing.

This sequence belongs to the cytochrome c oxidase VIIa family. Component of the complex IV (CIV, cytochrome c oxidase), a multisubunit enzyme composed of 14 subunits. The complex is composed of a catalytic core of 3 subunits MT-CO1, MT-CO2 and MT-CO3, encoded in the mitochondrial DNA, and 11 supernumerary subunits COX4I1 (or COX4I2), COX5A, COX5B, COX6A2 (or COX6A1), COX6B1 (or COX6B2), COX6C, COX7A1 (or COX7A2), COX7B, COX7C, COX8B and NDUFA4, which are encoded in the nuclear genome. The complex exists as a monomer or a dimer and forms supercomplexes (SCs) in the inner mitochondrial membrane with NADH-ubiquinone oxidoreductase (complex I, CI) and ubiquinol-cytochrome c oxidoreductase (cytochrome b-c1 complex, complex III, CIII), resulting in different assemblies (supercomplex SCI(1)III(2)IV(1) and megacomplex MCI(2)III(2)IV(2)).

It is found in the mitochondrion inner membrane. It functions in the pathway energy metabolism; oxidative phosphorylation. In terms of biological role, component of the mitochondrial respiratory complex IV (CIV, also named cytochrome c oxidase complex), the last enzyme in the mitochondrial electron transport chain which drives oxidative phosphorylation. The CIV complex is the component of the respiratory chain that catalyzes the reduction of oxygen to water. Acts as an assembly factor that specifically drives the homodimerization of CIV complexes, mediating the formation of mitochondrial respiratory supercomplexes (respirasomes) containing two CIV: supercomplxes with two molecules of CIV show improved activity. Despite being highly expressed in brown adipose tissue, not required for thermogenesis. In Trachypithecus cristatus (Silvered leaf-monkey), this protein is Cytochrome c oxidase subunit 7A1, mitochondrial (COX7A1).